We begin with the raw amino-acid sequence, 345 residues long: Protein RecA (345 aa).

ATP is bound at residue 66–73 (GPESSGKT).

The protein belongs to the RecA family.

The protein resides in the cytoplasm. Functionally, can catalyze the hydrolysis of ATP in the presence of single-stranded DNA, the ATP-dependent uptake of single-stranded DNA by duplex DNA, and the ATP-dependent hybridization of homologous single-stranded DNAs. It interacts with LexA causing its activation and leading to its autocatalytic cleavage. The chain is Protein RecA from Acidithiobacillus ferrooxidans (strain ATCC 23270 / DSM 14882 / CIP 104768 / NCIMB 8455) (Ferrobacillus ferrooxidans (strain ATCC 23270)).